We begin with the raw amino-acid sequence, 122 residues long: Large ribosomal subunit protein uL14 (122 aa).

Belongs to the universal ribosomal protein uL14 family. In terms of assembly, part of the 50S ribosomal subunit. Forms a cluster with proteins L3 and L19. In the 70S ribosome, L14 and L19 interact and together make contacts with the 16S rRNA in bridges B5 and B8.

Its function is as follows. Binds to 23S rRNA. Forms part of two intersubunit bridges in the 70S ribosome. The sequence is that of Large ribosomal subunit protein uL14 from Novosphingobium aromaticivorans (strain ATCC 700278 / DSM 12444 / CCUG 56034 / CIP 105152 / NBRC 16084 / F199).